The chain runs to 382 residues: Na(+)/H(+) antiporter NhaA (382 aa).

Helical transmembrane passes span 14 to 34, 49 to 69, 87 to 107, 117 to 137, 146 to 166, 171 to 191, 205 to 225, 247 to 267, 285 to 305, 321 to 341, and 356 to 376; these read AGGI…NSSF, MSVS…LIGL, IFPA…YVAF, GWAI…ALLG, VFLL…IAFF, LSVL…LLNS, FILW…GVVL, ALHP…NAGI, VALG…YVAV, IFAV…ISSL, and LGIL…LHIS.

It belongs to the NhaA Na(+)/H(+) (TC 2.A.33) antiporter family.

It is found in the cell inner membrane. It carries out the reaction Na(+)(in) + 2 H(+)(out) = Na(+)(out) + 2 H(+)(in). Na(+)/H(+) antiporter that extrudes sodium in exchange for external protons. The chain is Na(+)/H(+) antiporter NhaA from Aliivibrio salmonicida (strain LFI1238) (Vibrio salmonicida (strain LFI1238)).